The chain runs to 275 residues: Light-independent protochlorophyllide reductase iron-sulfur ATP-binding protein (275 aa).

Residues 10-15 (GIGKST) and lysine 39 each bind ATP. A Mg(2+)-binding site is contributed by serine 14. Residues cysteine 95 and cysteine 129 each contribute to the [4Fe-4S] cluster site. ATP is bound at residue 180–181 (NR).

Belongs to the NifH/BchL/ChlL family. In terms of assembly, homodimer. Protochlorophyllide reductase is composed of three subunits; ChlL, ChlN and ChlB. The cofactor is [4Fe-4S] cluster.

It carries out the reaction chlorophyllide a + oxidized 2[4Fe-4S]-[ferredoxin] + 2 ADP + 2 phosphate = protochlorophyllide a + reduced 2[4Fe-4S]-[ferredoxin] + 2 ATP + 2 H2O. The protein operates within porphyrin-containing compound metabolism; chlorophyll biosynthesis (light-independent). Functionally, component of the dark-operative protochlorophyllide reductase (DPOR) that uses Mg-ATP and reduced ferredoxin to reduce ring D of protochlorophyllide (Pchlide) to form chlorophyllide a (Chlide). This reaction is light-independent. The L component serves as a unique electron donor to the NB-component of the complex, and binds Mg-ATP. This is Light-independent protochlorophyllide reductase iron-sulfur ATP-binding protein from Gloeobacter violaceus (strain ATCC 29082 / PCC 7421).